Reading from the N-terminus, the 631-residue chain is Phosphomethylpyrimidine synthase (631 aa).

Residues asparagine 239, methionine 268, tyrosine 297, histidine 333, 353–355 (SRG), 394–397 (DGLR), and glutamate 433 each bind substrate. A Zn(2+)-binding site is contributed by histidine 437. A substrate-binding site is contributed by tyrosine 460. A Zn(2+)-binding site is contributed by histidine 501. The [4Fe-4S] cluster site is built by cysteine 581, cysteine 584, and cysteine 589.

The protein belongs to the ThiC family. Homodimer. It depends on [4Fe-4S] cluster as a cofactor.

The catalysed reaction is 5-amino-1-(5-phospho-beta-D-ribosyl)imidazole + S-adenosyl-L-methionine = 4-amino-2-methyl-5-(phosphooxymethyl)pyrimidine + CO + 5'-deoxyadenosine + formate + L-methionine + 3 H(+). It participates in cofactor biosynthesis; thiamine diphosphate biosynthesis. Functionally, catalyzes the synthesis of the hydroxymethylpyrimidine phosphate (HMP-P) moiety of thiamine from aminoimidazole ribotide (AIR) in a radical S-adenosyl-L-methionine (SAM)-dependent reaction. In Shigella boydii serotype 4 (strain Sb227), this protein is Phosphomethylpyrimidine synthase.